The primary structure comprises 228 residues: MAGQRLAAGFLQVPAVTRAYTAACVLTTAAVQLELLSPFQLYFNPHLVFRKFQVWRLITTFLFFGPLGFGFFFNMLFVFRYCRMLEEGSFRGRKADFVFMFLFGGVLMTLLGFLGSLFFLGQALMAMLVYVWSRRSPHVRVNFFGLLNFQAPFLPWALMGFSLLLGNSVVTDLLGILVGHIYYFLEDVFPNQPGGKRLLLTPSVLKLLLDDPQEDPDYLPLPEEQPEL.

Over 1–22 the chain is Cytoplasmic; sequence MAGQRLAAGFLQVPAVTRAYTA. A helical transmembrane segment spans residues 23–43; that stretch reads ACVLTTAAVQLELLSPFQLYF. Over 44–57 the chain is Lumenal; sequence NPHLVFRKFQVWRL. The helical transmembrane segment at 58–78 threads the bilayer; sequence ITTFLFFGPLGFGFFFNMLFV. Topologically, residues 79-98 are cytoplasmic; sequence FRYCRMLEEGSFRGRKADFV. The helical transmembrane segment at 99–119 threads the bilayer; that stretch reads FMFLFGGVLMTLLGFLGSLFF. At 120–168 the chain is on the lumenal side; that stretch reads LGQALMAMLVYVWSRRSPHVRVNFFGLLNFQAPFLPWALMGFSLLLGNS. A helical transmembrane segment spans residues 169–189; it reads VVTDLLGILVGHIYYFLEDVF. Over 190–228 the chain is Cytoplasmic; sequence PNQPGGKRLLLTPSVLKLLLDDPQEDPDYLPLPEEQPEL.

Belongs to the derlin family. Forms homo- and heterooligomers with DERL2 and, to a lesser extent, with DERL1. Interacts with VCP and EDEM1. Interacts with SELENOK and SELENOS. Interacts with the signal recognition particle/SRP and the SRP receptor; in the process of endoplasmic reticulum stress-induced pre-emptive quality control. As to expression, highly expressed in spleen, lung, liver, spleen and testis. Expressed at intermediate level in kidney. Weakly or not expressed in brain, heart and skeletal muscle.

Its subcellular location is the endoplasmic reticulum membrane. In terms of biological role, functional component of endoplasmic reticulum-associated degradation (ERAD) for misfolded lumenal glycoproteins, but not that of misfolded nonglycoproteins. May act by forming a channel that allows the retrotranslocation of misfolded glycoproteins into the cytosol where they are ubiquitinated and degraded by the proteasome. May mediate the interaction between VCP and the misfolded glycoproteins. May be involved in endoplasmic reticulum stress-induced pre-emptive quality control, a mechanism that selectively attenuates the translocation of newly synthesized proteins into the endoplasmic reticulum and reroutes them to the cytosol for proteasomal degradation. The polypeptide is Derlin-3 (Mus musculus (Mouse)).